Consider the following 374-residue polypeptide: Phosphatidyl-myo-inositol mannosyltransferase (374 aa).

Residues Y9 and G16 each contribute to the GDP-alpha-D-mannose site. A 1,2-diacyl-sn-glycero-3-phospho-(1D-myo-inositol) contacts are provided by residues Q18, 62–63 (YN), and R68. Residues R196, 201–202 (RK), 251–253 (VDD), K256, 274–278 (ESFGI), and E282 contribute to the GDP-alpha-D-mannose site.

This sequence belongs to the glycosyltransferase group 1 family. Glycosyltransferase 4 subfamily. As to quaternary structure, monomer. It depends on Mg(2+) as a cofactor.

Its subcellular location is the cell membrane. The enzyme catalyses a 1,2-diacyl-sn-glycero-3-phospho-(1D-myo-inositol) + GDP-alpha-D-mannose = a 1,2-diacyl-sn-glycero-3-phospho-[alpha-D-mannopyranosyl-(1&lt;-&gt;6)-D-myo-inositol] + GDP + H(+). The protein operates within phospholipid metabolism; phosphatidylinositol metabolism. Its function is as follows. Involved in the biosynthesis of phosphatidyl-myo-inositol mannosides (PIM) which are early precursors in the biosynthesis of lipomannans (LM) and lipoarabinomannans (LAM). Catalyzes the addition of a mannosyl residue from GDP-D-mannose (GDP-Man) to the position 2 of the carrier lipid phosphatidyl-myo-inositol (PI) to generate a phosphatidyl-myo-inositol bearing an alpha-1,2-linked mannose residue (PIM1). The sequence is that of Phosphatidyl-myo-inositol mannosyltransferase from Mycobacterium leprae (strain TN).